The chain runs to 339 residues: Bifunctional NMN adenylyltransferase/Nudix hydrolase (339 aa).

The interval 1-183 is NMN adenylyltransferase; that stretch reads MQTKYQYGIY…RYIALCDEYQ (183 aa). In terms of domain architecture, Nudix hydrolase spans 199 to 335; it reads PTFITTDAVV…EDHFQIIQHF (137 aa). The Nudix box motif lies at 233-254; that stretch reads GFIKQNETLVEGMLRELKEETR.

It in the N-terminal section; belongs to the archaeal NMN adenylyltransferase family. Mg(2+) serves as cofactor. Requires Mn(2+) as cofactor.

The protein localises to the cytoplasm. The catalysed reaction is beta-nicotinamide D-ribonucleotide + ATP + H(+) = diphosphate + NAD(+). It participates in cofactor biosynthesis; NAD(+) biosynthesis; NAD(+) from nicotinamide D-ribonucleotide: step 1/1. Functionally, the Nudix hydrolase domain is active on ADP-ribose, (2')-phospho-ADP-ribose, IDP-ribose and NADPH. The protein is Bifunctional NMN adenylyltransferase/Nudix hydrolase of Synechocystis sp. (strain ATCC 27184 / PCC 6803 / Kazusa).